A 376-amino-acid chain; its full sequence is UPF0284 protein glr4139 (376 aa).

It belongs to the UPF0284 family.

The polypeptide is UPF0284 protein glr4139 (Gloeobacter violaceus (strain ATCC 29082 / PCC 7421)).